Consider the following 94-residue polypeptide: Cell division topological specificity factor (94 aa).

Belongs to the MinE family.

Its function is as follows. Prevents the cell division inhibition by proteins MinC and MinD at internal division sites while permitting inhibition at polar sites. This ensures cell division at the proper site by restricting the formation of a division septum at the midpoint of the long axis of the cell. This Acetivibrio thermocellus (strain ATCC 27405 / DSM 1237 / JCM 9322 / NBRC 103400 / NCIMB 10682 / NRRL B-4536 / VPI 7372) (Clostridium thermocellum) protein is Cell division topological specificity factor.